Here is a 115-residue protein sequence, read N- to C-terminus: UPF0102 protein NGO_1987 (115 aa).

The protein belongs to the UPF0102 family.

This is UPF0102 protein NGO_1987 from Neisseria gonorrhoeae (strain ATCC 700825 / FA 1090).